Reading from the N-terminus, the 310-residue chain is Terpene synthase 6 (310 aa).

A DDxx(x)D/E motif motif is present at residues 93 to 98 (DDFYFE). The short motif at 222–230 (NDCYSFNKE) is the NDxxSxxxD/E motif element.

It belongs to the terpene synthase family.

It catalyses the reaction (2E,6E)-farnesyl diphosphate = (E)-beta-farnesene + diphosphate. It carries out the reaction (2E,6E)-farnesyl diphosphate = (1S,2S,4R)-beta-elemene + diphosphate. The catalysed reaction is (2E,6E)-farnesyl diphosphate = (3E,6E)-alpha-farnesene + diphosphate. Functionally, terpene synthase that converts its substrate farnesyl diphosphate (FPP) into the sesquiterpenes beta-elemene, (E)-beta-farnesene and (E,E)-alpha-farnesene. In Dictyostelium purpureum (Slime mold), this protein is Terpene synthase 6.